We begin with the raw amino-acid sequence, 570 residues long: Glutamate--tRNA ligase (570 aa).

Residues 107–117 (PNPDFVLHLGS) carry the 'HIGH' region motif.

This sequence belongs to the class-I aminoacyl-tRNA synthetase family. Glutamate--tRNA ligase type 2 subfamily.

It localises to the cytoplasm. The enzyme catalyses tRNA(Glu) + L-glutamate + ATP = L-glutamyl-tRNA(Glu) + AMP + diphosphate. Functionally, catalyzes the attachment of glutamate to tRNA(Glu) in a two-step reaction: glutamate is first activated by ATP to form Glu-AMP and then transferred to the acceptor end of tRNA(Glu). The sequence is that of Glutamate--tRNA ligase from Pyrobaculum islandicum (strain DSM 4184 / JCM 9189 / GEO3).